The primary structure comprises 194 residues: Protein GrpE (194 aa).

Over residues methionine 1 to serine 14 the composition is skewed to basic and acidic residues. Residues methionine 1–valine 48 form a disordered region. A compositionally biased stretch (polar residues) spans alanine 24–alanine 34.

Belongs to the GrpE family. In terms of assembly, homodimer.

The protein localises to the cytoplasm. Its function is as follows. Participates actively in the response to hyperosmotic and heat shock by preventing the aggregation of stress-denatured proteins, in association with DnaK and GrpE. It is the nucleotide exchange factor for DnaK and may function as a thermosensor. Unfolded proteins bind initially to DnaJ; upon interaction with the DnaJ-bound protein, DnaK hydrolyzes its bound ATP, resulting in the formation of a stable complex. GrpE releases ADP from DnaK; ATP binding to DnaK triggers the release of the substrate protein, thus completing the reaction cycle. Several rounds of ATP-dependent interactions between DnaJ, DnaK and GrpE are required for fully efficient folding. This chain is Protein GrpE, found in Parabacteroides distasonis (strain ATCC 8503 / DSM 20701 / CIP 104284 / JCM 5825 / NCTC 11152).